A 318-amino-acid chain; its full sequence is tRNA-modifying protein YgfZ (318 aa).

W28 and W182 together coordinate folate.

The protein belongs to the tRNA-modifying YgfZ family.

The protein resides in the cytoplasm. Folate-binding protein involved in regulating the level of ATP-DnaA and in the modification of some tRNAs. It is probably a key factor in regulatory networks that act via tRNA modification, such as initiation of chromosomal replication. The chain is tRNA-modifying protein YgfZ from Aliivibrio fischeri (strain ATCC 700601 / ES114) (Vibrio fischeri).